A 558-amino-acid polypeptide reads, in one-letter code: Armadillo repeat-containing X-linked protein 5 (558 aa).

2 stretches are compositionally biased toward basic and acidic residues: residues 1–14 (MVDS…RGKA) and 139–156 (KSHD…REEA). Disordered stretches follow at residues 1-34 (MVDS…NGKT) and 139-163 (KSHD…MKSS). ARM repeat units follow at residues 300-339 (CKSR…GISP), 422-461 (VKFE…CLSK), 463-503 (HANT…NINF), and 520-558 (SELI…ILKL).

This sequence belongs to the eutherian X-chromosome-specific Armcx family.

The sequence is that of Armadillo repeat-containing X-linked protein 5 (ARMCX5) from Pongo abelii (Sumatran orangutan).